Here is a 282-residue protein sequence, read N- to C-terminus: 2,3,4,5-tetrahydropyridine-2,6-dicarboxylate N-succinyltransferase (282 aa).

The substrate site is built by Arg-109 and Asp-146.

The protein belongs to the transferase hexapeptide repeat family. Homotrimer.

Its subcellular location is the cytoplasm. The catalysed reaction is (S)-2,3,4,5-tetrahydrodipicolinate + succinyl-CoA + H2O = (S)-2-succinylamino-6-oxoheptanedioate + CoA. It participates in amino-acid biosynthesis; L-lysine biosynthesis via DAP pathway; LL-2,6-diaminopimelate from (S)-tetrahydrodipicolinate (succinylase route): step 1/3. The chain is 2,3,4,5-tetrahydropyridine-2,6-dicarboxylate N-succinyltransferase from Bartonella bacilliformis (strain ATCC 35685 / KC583 / Herrer 020/F12,63).